The primary structure comprises 188 residues: uncharacterized protein (188 aa).

Positions 1–15 (MVSSKDKIKEELKQE) are enriched in basic and acidic residues. Positions 1-21 (MVSSKDKIKEELKQEEPEENV) are disordered.

This is an uncharacterized protein from Saccharolobus islandicus (Sulfolobus islandicus).